The sequence spans 297 residues: Probable endonuclease 4 (297 aa).

Residues His-69, His-110, Glu-145, Asp-179, His-182, His-214, Asp-227, His-229, and Glu-259 each contribute to the Zn(2+) site.

It belongs to the AP endonuclease 2 family. Zn(2+) is required as a cofactor.

The enzyme catalyses Endonucleolytic cleavage to 5'-phosphooligonucleotide end-products.. Functionally, endonuclease IV plays a role in DNA repair. It cleaves phosphodiester bonds at apurinic or apyrimidinic (AP) sites, generating a 3'-hydroxyl group and a 5'-terminal sugar phosphate. This Oceanobacillus iheyensis (strain DSM 14371 / CIP 107618 / JCM 11309 / KCTC 3954 / HTE831) protein is Probable endonuclease 4.